Here is a 195-residue protein sequence, read N- to C-terminus: MRTAQITRKTAETDISVEINLDGTGTYDNLTGVGFFDHMLDQLARHALMDMTVRCAGDLHIDDHHSVEDVGIALGQALTQAMGDKRGIRRYGECVLPMDDARVACALDLSGRPFLVWDVEMPTAKIGTFDTELVREFFQAFATHGGITLHLTQAAGVNSHHIAEAAFKATARALRDALEVDPRTADAIPSTKGSL.

The protein belongs to the imidazoleglycerol-phosphate dehydratase family.

It localises to the cytoplasm. The enzyme catalyses D-erythro-1-(imidazol-4-yl)glycerol 3-phosphate = 3-(imidazol-4-yl)-2-oxopropyl phosphate + H2O. It participates in amino-acid biosynthesis; L-histidine biosynthesis; L-histidine from 5-phospho-alpha-D-ribose 1-diphosphate: step 6/9. The protein is Imidazoleglycerol-phosphate dehydratase of Jannaschia sp. (strain CCS1).